The primary structure comprises 366 residues: Protein RecA (366 aa).

An ATP-binding site is contributed by 81 to 88 (GPESSGKT).

The protein belongs to the RecA family.

The protein localises to the cytoplasm. Its function is as follows. Can catalyze the hydrolysis of ATP in the presence of single-stranded DNA, the ATP-dependent uptake of single-stranded DNA by duplex DNA, and the ATP-dependent hybridization of homologous single-stranded DNAs. It interacts with LexA causing its activation and leading to its autocatalytic cleavage. The chain is Protein RecA from Leptospira interrogans serogroup Icterohaemorrhagiae serovar copenhageni (strain Fiocruz L1-130).